The primary structure comprises 186 residues: Elongation factor P (186 aa).

The protein belongs to the elongation factor P family.

The protein localises to the cytoplasm. The protein operates within protein biosynthesis; polypeptide chain elongation. In terms of biological role, involved in peptide bond synthesis. Stimulates efficient translation and peptide-bond synthesis on native or reconstituted 70S ribosomes in vitro. Probably functions indirectly by altering the affinity of the ribosome for aminoacyl-tRNA, thus increasing their reactivity as acceptors for peptidyl transferase. This is Elongation factor P from Prochlorococcus marinus (strain MIT 9515).